Consider the following 185-residue polypeptide: Large ribosomal subunit protein uL5 (185 aa).

It belongs to the universal ribosomal protein uL5 family. Part of the 50S ribosomal subunit; part of the 5S rRNA/L5/L18/L25 subcomplex. Contacts the 5S rRNA and the P site tRNA. Forms a bridge to the 30S subunit in the 70S ribosome.

This is one of the proteins that bind and probably mediate the attachment of the 5S RNA into the large ribosomal subunit, where it forms part of the central protuberance. In the 70S ribosome it contacts protein S13 of the 30S subunit (bridge B1b), connecting the 2 subunits; this bridge is implicated in subunit movement. Contacts the P site tRNA; the 5S rRNA and some of its associated proteins might help stabilize positioning of ribosome-bound tRNAs. This is Large ribosomal subunit protein uL5 from Bradyrhizobium sp. (strain ORS 278).